The sequence spans 517 residues: MGSAVTSDHSAKGGATALMPYDEVLRGYEPVLGLETHVELGTRSKMFCSCATTFGAEPNTQVCPVCLALPGALPVVNSAAVESAIRLGLALNCSIAEWCRFARKNYFYPDMPKNYQISQYDEPLCYDGYLDVTVDTPEGPREFRIGIERVHMEEDTGKTSHVGGADGRIHGAEYSTVDYNRAGIPLLEIVTKPIEDAGEWAPQVARAYVRELRDLIRALGISDVRMEEGSLRCDVNVSLKPRGSTEWGTRTETKNVNSLRSIERAVRHEIERQGGVLSAGGRVVQETRHFQESTGTTVAGRSKEEAQDYRYFPDPDLVPVAPDREWVEQLRATLPELPSAKRRRLKAEWNLTDKELQDLVNANAVDLVEQTVAAGAPPAEARKWWLNDLSRRATETGVELSELPITPAQVARVVELVAEGSLTNKLARQVVDGVLAGEGEPDEVVEARGLRVVSDDAALGAIVDQAIANNADAAEKVRNGKIAAVGALVGAVMRETKGQADAGRARQLILERLGVSG.

This sequence belongs to the GatB/GatE family. GatB subfamily. Heterotrimer of A, B and C subunits.

It carries out the reaction L-glutamyl-tRNA(Gln) + L-glutamine + ATP + H2O = L-glutaminyl-tRNA(Gln) + L-glutamate + ADP + phosphate + H(+). The enzyme catalyses L-aspartyl-tRNA(Asn) + L-glutamine + ATP + H2O = L-asparaginyl-tRNA(Asn) + L-glutamate + ADP + phosphate + 2 H(+). Its function is as follows. Allows the formation of correctly charged Asn-tRNA(Asn) or Gln-tRNA(Gln) through the transamidation of misacylated Asp-tRNA(Asn) or Glu-tRNA(Gln) in organisms which lack either or both of asparaginyl-tRNA or glutaminyl-tRNA synthetases. The reaction takes place in the presence of glutamine and ATP through an activated phospho-Asp-tRNA(Asn) or phospho-Glu-tRNA(Gln). The protein is Aspartyl/glutamyl-tRNA(Asn/Gln) amidotransferase subunit B of Thermobifida fusca (strain YX).